Reading from the N-terminus, the 405-residue chain is Tryptophan synthase beta chain (405 aa).

Lysine 98 carries the post-translational modification N6-(pyridoxal phosphate)lysine.

This sequence belongs to the TrpB family. In terms of assembly, tetramer of two alpha and two beta chains. Pyridoxal 5'-phosphate serves as cofactor.

The catalysed reaction is (1S,2R)-1-C-(indol-3-yl)glycerol 3-phosphate + L-serine = D-glyceraldehyde 3-phosphate + L-tryptophan + H2O. It participates in amino-acid biosynthesis; L-tryptophan biosynthesis; L-tryptophan from chorismate: step 5/5. Functionally, the beta subunit is responsible for the synthesis of L-tryptophan from indole and L-serine. The polypeptide is Tryptophan synthase beta chain (Afipia carboxidovorans (strain ATCC 49405 / DSM 1227 / KCTC 32145 / OM5) (Oligotropha carboxidovorans)).